Consider the following 166-residue polypeptide: Transcriptional repressor NrdR (166 aa).

A zinc finger spans residues 3-34; that stretch reads CPFCRNPDSRVVDSRMADDGSSIRRRRQCPEC. The 91-residue stretch at 46–136 folds into the ATP-cone domain; that stretch reads LSVIKRSGVG…VYQAFESLED (91 aa).

This sequence belongs to the NrdR family. It depends on Zn(2+) as a cofactor.

Its function is as follows. Negatively regulates transcription of bacterial ribonucleotide reductase nrd genes and operons by binding to NrdR-boxes. This is Transcriptional repressor NrdR from Paenarthrobacter aurescens (strain TC1).